Consider the following 60-residue polypeptide: Large ribosomal subunit protein eL37 (60 aa).

Residues Cys-18, Cys-21, Cys-33, and Cys-36 each contribute to the Zn(2+) site. A C4-type zinc finger spans residues Cys-18 to Cys-36.

It belongs to the eukaryotic ribosomal protein eL37 family. Zn(2+) serves as cofactor.

Its function is as follows. Binds to the 23S rRNA. In Methanothermobacter thermautotrophicus (strain ATCC 29096 / DSM 1053 / JCM 10044 / NBRC 100330 / Delta H) (Methanobacterium thermoautotrophicum), this protein is Large ribosomal subunit protein eL37 (rpl37e).